The chain runs to 292 residues: 4-diphosphocytidyl-2-C-methyl-D-erythritol kinase (292 aa).

The active site involves K10. P100–S110 provides a ligand contact to ATP. Residue D142 is part of the active site.

Belongs to the GHMP kinase family. IspE subfamily. In terms of assembly, homodimer.

It carries out the reaction 4-CDP-2-C-methyl-D-erythritol + ATP = 4-CDP-2-C-methyl-D-erythritol 2-phosphate + ADP + H(+). Its pathway is isoprenoid biosynthesis; isopentenyl diphosphate biosynthesis via DXP pathway; isopentenyl diphosphate from 1-deoxy-D-xylulose 5-phosphate: step 3/6. In terms of biological role, catalyzes the phosphorylation of the position 2 hydroxy group of 4-diphosphocytidyl-2C-methyl-D-erythritol. In Buchnera aphidicola subsp. Schizaphis graminum (strain Sg), this protein is 4-diphosphocytidyl-2-C-methyl-D-erythritol kinase.